A 245-amino-acid polypeptide reads, in one-letter code: MDPSENVFKYETAYDLLVRLGAERLFLRTCLSILDPVLELHPGKCYEIDGDLGVGKTQICYSFAAKFLQTKKTAKMGWIGATPLRTDHLLLHIEHFGNQTNEDILDRIVCKRVEKIAELQDSLTRFLDTINLQLVIVENIDAILHDTVYHKEMGRSMQSDVVERIRKLTKLEITVILTNHITHWRGYPAPALGAFWSSQINNRFFIEKRNDDSDIRIVSAMKGEQDDGMNRIEFKIGDRGLKAVE.

As to quaternary structure, interacts with brc-2 and rad-51.

The protein resides in the nucleus. In terms of biological role, has a role in the homologous recombination repair (HRR) of genomic DNA during meiosis. Required for rad-51 recruitment onto ssDNA gaps generated at stalled replication fork barriers. In Caenorhabditis elegans, this protein is RAD51-like protein 1 (rfs-1).